A 21-amino-acid polypeptide reads, in one-letter code: Basic phospholipase A2 BjIV (21 aa).

Belongs to the phospholipase A2 family. Group II subfamily. In terms of assembly, can form dimers, trimers and tetramers. The cofactor is Ca(2+). Post-translationally, contains seven disulfide bonds. As to expression, expressed by the venom gland.

It localises to the secreted. It catalyses the reaction a 1,2-diacyl-sn-glycero-3-phosphocholine + H2O = a 1-acyl-sn-glycero-3-phosphocholine + a fatty acid + H(+). Inhibited by crotapotin. In terms of biological role, snake venom phospholipase A2 has a high enzymatic activity and produces moderate myonecrosis in skeletal muscle, but shows no neuromuscular activity in mouse phrenic nerve-diaphragm preparations. PLA2 catalyzes the calcium-dependent hydrolysis of the 2-acyl groups in 3-sn-phosphoglycerides. The protein is Basic phospholipase A2 BjIV of Bothrops jararacussu (Jararacussu).